The sequence spans 478 residues: Proline--tRNA ligase (478 aa).

It belongs to the class-II aminoacyl-tRNA synthetase family. ProS type 3 subfamily. In terms of assembly, homodimer.

It localises to the cytoplasm. It carries out the reaction tRNA(Pro) + L-proline + ATP = L-prolyl-tRNA(Pro) + AMP + diphosphate. Its function is as follows. Catalyzes the attachment of proline to tRNA(Pro) in a two-step reaction: proline is first activated by ATP to form Pro-AMP and then transferred to the acceptor end of tRNA(Pro). The protein is Proline--tRNA ligase of Ruminiclostridium cellulolyticum (strain ATCC 35319 / DSM 5812 / JCM 6584 / H10) (Clostridium cellulolyticum).